The sequence spans 348 residues: Cyclic AMP-dependent transcription factor ATF-4 (348 aa).

Residue Lys-53 forms a Glycyl lysine isopeptide (Lys-Gly) (interchain with G-Cter in SUMO2) linkage. 2 disordered regions span residues 151-174 (QGAPFTFFQPLPPSPGTLSSTPDH) and 187-265 (PEGD…GEKM). Ser-211, Ser-215, Ser-220, Ser-227, and Ser-231 each carry phosphoserine. The BetaTrCP degron motif signature appears at 211 to 220 (SDNDSGICMS). Positions 221–241 (PDSSLGSPQDSPSTSRGSPNK) are enriched in polar residues. A 4-hydroxyproline modification is found at Pro-232. Ser-242 and Ser-245 each carry phosphoserine. Residues 242-253 (SLLSPGALSGSS) are compositionally biased toward low complexity. Residues Lys-256, Lys-264, and Lys-269 each participate in a glycyl lysine isopeptide (Lys-Gly) (interchain with G-Cter in SUMO2) cross-link. Positions 275 to 338 (LDKKLKKMEQ…QYLKDQIEEV (64 aa)) constitute a bZIP domain. The segment at 277–297 (KKLKKMEQNKTAATRYRQKKR) is basic motif. The interval 302-338 (ALTGECKELEKKNEALKEKADSLAKEIQYLKDQIEEV) is interaction with GABBR1. Residues 303–331 (LTGECKELEKKNEALKEKADSLAKEIQYL) are leucine-zipper. Position 308 is an N6-acetyllysine (Lys-308).

It belongs to the bZIP family. As to quaternary structure, binds DNA as a homodimer and as a heterodimer. Heterodimer; heterodimerizes with CEBPB. Heterodimer; heterodimerizes with DDIT3/CHOP. Interacts with CEP290 (via an N-terminal region). Interacts with NEK6, DAPK2 (isoform 2) and ZIPK/DAPK3. Interacts (via its leucine zipper domain) with GABBR1 and GABBR2 (via their C-termini). Forms a heterodimer with TXLNG in osteoblasts. Interacts (via its DNA binding domain) with FOXO1 (C-terminal half); the interaction occurs in osteoblasts and regulates glucose homeostasis through suppression of beta-cell proliferation and a decrease in insulin production. Interacts with SATB2; the interaction results in enhanced DNA binding and transactivation by these transcription factors. Interacts with ABRAXAS2. Interacts with TRIB3, inhibiting the transactivation activity of ATF4. Interacts with DISC1; which inhibits ATF4 transcription factor activity by disrupting ATF4 dimerization and DNA-binding. Interacts with EP300/p300; EP300/p300 stabilizes ATF4 and increases its transcriptional activity independently of its catalytic activity by preventing its ubiquitination. In terms of processing, ubiquitinated by SCF(BTRC) in response to mTORC1 signal, followed by proteasomal degradation and leading to down-regulate expression of SIRT4. Interaction with EP300/p300 inhibits ubiquitination by SCF(BTRC). Post-translationally, phosphorylation at Ser-242 by RPS6KA3/RSK2 in osteoblasts enhances transactivation activity and promotes osteoblast differentiation. Phosphorylated on the betaTrCP degron motif at Ser-215, followed by phosphorylation at Ser-220, Ser-227, Ser-231 and Ser-245, promoting interaction with BTRC and ubiquitination. Phosphorylation is promoted by mTORC1. Phosphorylation at Ser-211 by CK2 decreases its stability. Phosphorylated by NEK6. Hydroxylated by PHD3, leading to decreased protein stability.

It is found in the nucleus. The protein resides in the nucleus speckle. Its subcellular location is the cytoplasm. The protein localises to the cell membrane. It localises to the cytoskeleton. It is found in the microtubule organizing center. The protein resides in the centrosome. Functionally, transcription factor that binds the cAMP response element (CRE) (consensus: 5'-GTGACGT[AC][AG]-3') and displays two biological functions, as regulator of metabolic and redox processes under normal cellular conditions, and as master transcription factor during integrated stress response (ISR). Binds to asymmetric CRE's as a heterodimer and to palindromic CRE's as a homodimer. Core effector of the ISR, which is required for adaptation to various stress such as endoplasmic reticulum (ER) stress, amino acid starvation, mitochondrial stress or oxidative stress. During ISR, ATF4 translation is induced via an alternative ribosome translation re-initiation mechanism in response to EIF2S1/eIF-2-alpha phosphorylation, and stress-induced ATF4 acts as a master transcription factor of stress-responsive genes in order to promote cell recovery. Promotes the transcription of genes linked to amino acid sufficiency and resistance to oxidative stress to protect cells against metabolic consequences of ER oxidation. Activates the transcription of NLRP1, possibly in concert with other factors in response to ER stress. Activates the transcription of asparagine synthetase (ASNS) in response to amino acid deprivation or ER stress. However, when associated with DDIT3/CHOP, the transcriptional activation of the ASNS gene is inhibited in response to amino acid deprivation. Together with DDIT3/CHOP, mediates programmed cell death by promoting the expression of genes involved in cellular amino acid metabolic processes, mRNA translation and the terminal unfolded protein response (terminal UPR), a cellular response that elicits programmed cell death when ER stress is prolonged and unresolved. Activates the expression of COX7A2L/SCAF1 downstream of the EIF2AK3/PERK-mediated unfolded protein response, thereby promoting formation of respiratory chain supercomplexes and increasing mitochondrial oxidative phosphorylation. Together with DDIT3/CHOP, activates the transcription of the IRS-regulator TRIB3 and promotes ER stress-induced neuronal cell death by regulating the expression of BBC3/PUMA in response to ER stress. May cooperate with the UPR transcriptional regulator QRICH1 to regulate ER protein homeostasis which is critical for cell viability in response to ER stress. In the absence of stress, ATF4 translation is at low levels and it is required for normal metabolic processes such as embryonic lens formation, fetal liver hematopoiesis, bone development and synaptic plasticity. Acts as a regulator of osteoblast differentiation in response to phosphorylation by RPS6KA3/RSK2: phosphorylation in osteoblasts enhances transactivation activity and promotes expression of osteoblast-specific genes and post-transcriptionally regulates the synthesis of Type I collagen, the main constituent of the bone matrix. Cooperates with FOXO1 in osteoblasts to regulate glucose homeostasis through suppression of beta-cell production and decrease in insulin production. Activates transcription of SIRT4. Regulates the circadian expression of the core clock component PER2 and the serotonin transporter SLC6A4. Binds in a circadian time-dependent manner to the cAMP response elements (CRE) in the SLC6A4 and PER2 promoters and periodically activates the transcription of these genes. Mainly acts as a transcriptional activator in cellular stress adaptation, but it can also act as a transcriptional repressor: acts as a regulator of synaptic plasticity by repressing transcription, thereby inhibiting induction and maintenance of long-term memory. Regulates synaptic functions via interaction with DISC1 in neurons, which inhibits ATF4 transcription factor activity by disrupting ATF4 dimerization and DNA-binding. The polypeptide is Cyclic AMP-dependent transcription factor ATF-4 (Bos taurus (Bovine)).